The following is a 591-amino-acid chain: Probable translation initiation factor IF-2 (591 aa).

Positions 6–220 (IRTPIVCVMG…IMIGLAQRYM (215 aa)) constitute a tr-type G domain. Residues 15 to 22 (GHVDHGKT) are G1. 15 to 22 (GHVDHGKT) contributes to the GTP binding site. The G2 stretch occupies residues 40 to 44 (AITQH). Residues 76 to 79 (DTPG) are G3. GTP-binding positions include 76–80 (DTPGH) and 130–133 (TKVD). The G4 stretch occupies residues 130–133 (TKVD). The tract at residues 198-200 (SAH) is G5.

The protein belongs to the TRAFAC class translation factor GTPase superfamily. Classic translation factor GTPase family. IF-2 subfamily.

Its function is as follows. Function in general translation initiation by promoting the binding of the formylmethionine-tRNA to ribosomes. Seems to function along with eIF-2. The chain is Probable translation initiation factor IF-2 from Methanoregula boonei (strain DSM 21154 / JCM 14090 / 6A8).